The sequence spans 171 residues: S-ribosylhomocysteine lyase (171 aa).

Fe cation contacts are provided by His-54, His-58, and Cys-128.

The protein belongs to the LuxS family. In terms of assembly, homodimer. It depends on Fe cation as a cofactor.

It catalyses the reaction S-(5-deoxy-D-ribos-5-yl)-L-homocysteine = (S)-4,5-dihydroxypentane-2,3-dione + L-homocysteine. Functionally, involved in the synthesis of autoinducer 2 (AI-2) which is secreted by bacteria and is used to communicate both the cell density and the metabolic potential of the environment. The regulation of gene expression in response to changes in cell density is called quorum sensing. Catalyzes the transformation of S-ribosylhomocysteine (RHC) to homocysteine (HC) and 4,5-dihydroxy-2,3-pentadione (DPD). The chain is S-ribosylhomocysteine lyase from Photorhabdus laumondii subsp. laumondii (strain DSM 15139 / CIP 105565 / TT01) (Photorhabdus luminescens subsp. laumondii).